Here is an 821-residue protein sequence, read N- to C-terminus: BDNF/NT-3 growth factors receptor (821 aa).

The signal sequence occupies residues 1 to 31 (MSPWLKWHGPAMARLWGLCLLVLGFWRASLA). 2 disulfide bridges follow: C32-C38 and C36-C45. Residues 32–61 (CPTSCKCSSARIWCTEPSPGIVAFPRLEPN) form the LRRNT domain. The Extracellular portion of the chain corresponds to 32–429 (CPTSCKCSSA…DVADQSNREH (398 aa)). N-linked (GlcNAc...) asparagine glycosylation is found at N67, N95, and N121. 2 LRR repeats span residues 92-113 (GLRNLTIVDSGLKFVAYKAFLK) and 116-137 (NLRHINFTRNKLTSLSRRHFRH). The LRRCT domain occupies 148-196 (NPFTCSCDIMWLKTLQETKSSPDTQDLYCLNESSKNMPLANLQIPNCGL). 2 disulfides stabilise this stretch: C152–C176 and C154–C194. N-linked (GlcNAc...) asparagine glycosylation is found at N178, N205, N241, N254, N280, N325, N338, N350, and N411. Ig-like C2-type domains are found at residues 197 to 282 (PSAR…VNLT) and 301 to 365 (WCIP…MAKN). C218 and C266 are disulfide-bonded. C302 and C345 are joined by a disulfide. Residues 430-453 (LSVYAVVVIASVVGFCLLVMLLLL) form a helical membrane-spanning segment. The interaction with MAPK8IP3/JIP3 stretch occupies residues 454-465 (KLARHSKFGMKG). Over 454-821 (KLARHSKFGM…ASPVYLDILG (368 aa)) the chain is Cytoplasmic. Positions 474-497 (DDSASPLHHISNGSNTPSSSEGGP) are disordered. Positions 484–494 (SNGSNTPSSSE) are enriched in polar residues. Position 515 is a phosphotyrosine (Y515). Residues 537-806 (IVLKRELGEG…KNIKSIHTLL (270 aa)) enclose the Protein kinase domain. ATP-binding positions include 543–551 (LGEGAFGKV) and K571. The Proton acceptor role is filled by D675. Phosphotyrosine; by autocatalysis is present on residues Y701, Y705, Y706, and Y816.

The protein belongs to the protein kinase superfamily. Tyr protein kinase family. Insulin receptor subfamily. As to quaternary structure, exists in a dynamic equilibrium between monomeric (low affinity) and dimeric (high affinity) structures. Interacts (phosphorylated upon activation by BDNF) with SHC1; mediates SHC1 phosphorylation and activation. Interacts (phosphorylated upon activation by BDNF) with PLCG1 and/or PLCG2; mediates PLCG1 phosphorylation and activation. Interacts with SH2B1 and SH2B2. Interacts with NGFR; may regulate the ligand specificity of the receptor. Interacts with SORCS2; this interaction is important for normal targeting to post-synaptic densities in response to high-frequency stimulation. Interacts (phosphorylated upon ligand-binding) with SH2D1A; regulates NTRK2. Interacts with SQSTM1 and KIDINS220. Interacts (phosphorylated upon ligand-binding) with FRS2; activates the MAPK signaling pathway. Interacts with APPL1. Interacts with MAPK8IP3/JIP3 and KLC1; interaction with KLC1 is mediated by MAPK8IP3/JIP3. Interacts with SORL1; this interaction facilitates NTRK2 trafficking between synaptic plasma membranes, postsynaptic densities and cell soma, hence positively regulates BDNF signaling. Interacts with SLITRK2. Phosphorylated. Undergoes ligand-mediated autophosphorylation that is required for interaction with SHC1 and PLCG1 and other downstream effectors. Some isoforms are not phosphorylated. Post-translationally, ubiquitinated. Undergoes polyubiquitination upon activation; regulated by NGFR. Ubiquitination regulates the internalization of the receptor. Expressed in the brain, in neurons (at protein level). Detected in hippocampus (at protein level). Widely expressed in the central and peripheral nervous system. The different forms are differentially expressed in various cell types. Isoform GP95-TRKB is specifically expressed in glial cells.

The protein resides in the cell membrane. The protein localises to the endosome membrane. It is found in the early endosome membrane. Its subcellular location is the cell projection. It localises to the axon. The protein resides in the dendrite. The protein localises to the cytoplasm. It is found in the perinuclear region. Its subcellular location is the postsynaptic density. It carries out the reaction L-tyrosyl-[protein] + ATP = O-phospho-L-tyrosyl-[protein] + ADP + H(+). The formation of active receptors dimers able to fully transduce the ligand-mediated signal, may be negatively regulated by the formation of inactive heterodimers with the non-catalytic isoforms. The neuronal activity and the influx of calcium positively regulate the kinase activity and the internalization of the receptor which are both important for active signaling. Regulated by NGFR that may control the internalization of the receptor. NGFR may also stimulate the activation by BDNF compared to NTF3 and NTF4. SH2D1A inhibits the autophosphorylation of the receptor, and alters the recruitment and activation of downstream effectors and signaling cascades. Its function is as follows. Receptor tyrosine kinase involved in the development and the maturation of the central and the peripheral nervous systems through regulation of neuron survival, proliferation, migration, differentiation, and synapse formation and plasticity. Receptor for BDNF/brain-derived neurotrophic factor and NTF4/neurotrophin-4. Alternatively can also bind NTF3/neurotrophin-3 which is less efficient in activating the receptor but regulates neuron survival through NTRK2. Upon ligand-binding, undergoes homodimerization, autophosphorylation and activation. Recruits, phosphorylates and/or activates several downstream effectors including SHC1, FRS2, SH2B1, SH2B2 and PLCG1 that regulate distinct overlapping signaling cascades. Through SHC1, FRS2, SH2B1, SH2B2 activates the GRB2-Ras-MAPK cascade that regulates for instance neuronal differentiation including neurite outgrowth. Through the same effectors controls the Ras-PI3 kinase-AKT1 signaling cascade that mainly regulates growth and survival. Through PLCG1 and the downstream protein kinase C-regulated pathways controls synaptic plasticity. Thereby, plays a role in learning and memory by regulating both short term synaptic function and long-term potentiation. PLCG1 also leads to NF-Kappa-B activation and the transcription of genes involved in cell survival. Hence, it is able to suppress anoikis, the apoptosis resulting from loss of cell-matrix interactions. Isoform GP95-TRKB may also play a role in neutrophin-dependent calcium signaling in glial cells and mediate communication between neurons and glia. The sequence is that of BDNF/NT-3 growth factors receptor from Mus musculus (Mouse).